The primary structure comprises 311 residues: Putative dihydroorotate dehydrogenase A (fumarate) (311 aa).

Substrate is bound by residues Lys45, 69–73, and Asn128; that span reads NSMGL. 45–46 contacts FMN; the sequence is KT. Asn128 serves as a coordination point for FMN. Residue Cys131 is the Nucleophile of the active site. Positions 165 and 193 each coordinate FMN. Position 194-195 (194-195) interacts with substrate; it reads NS. Residues Gly220, 248-249, and 270-271 contribute to the FMN site; these read GG and GT.

This sequence belongs to the dihydroorotate dehydrogenase family. Type 1 subfamily. As to quaternary structure, homodimer. Requires FMN as cofactor.

The protein resides in the cytoplasm. The catalysed reaction is (S)-dihydroorotate + fumarate = orotate + succinate. The protein operates within pyrimidine metabolism; UMP biosynthesis via de novo pathway. Catalyzes the conversion of dihydroorotate to orotate with fumarate as the electron acceptor. In Streptococcus pyogenes serotype M18 (strain MGAS8232), this protein is Putative dihydroorotate dehydrogenase A (fumarate) (pyrD).